We begin with the raw amino-acid sequence, 88 residues long: Small ribosomal subunit protein bS16 (88 aa).

It belongs to the bacterial ribosomal protein bS16 family.

The sequence is that of Small ribosomal subunit protein bS16 from Symbiobacterium thermophilum (strain DSM 24528 / JCM 14929 / IAM 14863 / T).